Consider the following 220-residue polypeptide: Small ribosomal subunit protein eS1 (220 aa).

Belongs to the eukaryotic ribosomal protein eS1 family.

In Methanococcus vannielii (strain ATCC 35089 / DSM 1224 / JCM 13029 / OCM 148 / SB), this protein is Small ribosomal subunit protein eS1.